A 74-amino-acid chain; its full sequence is Guanine nucleotide-binding protein G(T) subunit gamma-T1 (74 aa).

Cysteine 71 bears the Cysteine methyl ester mark. Residue cysteine 71 is the site of S-farnesyl cysteine attachment. A propeptide spans 72-74 (removed in mature form); the sequence is VIS.

The protein belongs to the G protein gamma family. In terms of assembly, g proteins are composed of 3 units, alpha, beta and gamma. Retinal rod outer segment.

Its subcellular location is the cell membrane. Functionally, guanine nucleotide-binding proteins (G proteins) are involved as a modulator or transducer in various transmembrane signaling systems. The beta and gamma chains are required for the GTPase activity, for replacement of GDP by GTP, and for G protein-effector interaction. The chain is Guanine nucleotide-binding protein G(T) subunit gamma-T1 (Gngt1) from Mus musculus (Mouse).